The primary structure comprises 92 residues: Co-chaperonin GroES (92 aa).

The protein belongs to the GroES chaperonin family. As to quaternary structure, heptamer of 7 subunits arranged in a ring. Interacts with the chaperonin GroEL.

It localises to the cytoplasm. Together with the chaperonin GroEL, plays an essential role in assisting protein folding. The GroEL-GroES system forms a nano-cage that allows encapsulation of the non-native substrate proteins and provides a physical environment optimized to promote and accelerate protein folding. GroES binds to the apical surface of the GroEL ring, thereby capping the opening of the GroEL channel. The chain is Co-chaperonin GroES from Methanosarcina barkeri (strain Fusaro / DSM 804).